A 34-amino-acid chain; its full sequence is Surfactant protein C (34 aa).

C4 carries S-palmitoyl cysteine lipidation.

The protein localises to the secreted. The protein resides in the extracellular space. Its subcellular location is the surface film. Functionally, pulmonary surfactant associated proteins promote alveolar stability by lowering the surface tension at the air-liquid interface in the peripheral air spaces. The chain is Surfactant protein C (SFTPC) from Canis lupus familiaris (Dog).